The primary structure comprises 201 residues: Orotate phosphoribosyltransferase (201 aa).

113–121 (EDIITTGKS) serves as a coordination point for 5-phospho-alpha-D-ribose 1-diphosphate. Thr117 and Arg145 together coordinate orotate.

It belongs to the purine/pyrimidine phosphoribosyltransferase family. PyrE subfamily. As to quaternary structure, homodimer. Mg(2+) is required as a cofactor.

It carries out the reaction orotidine 5'-phosphate + diphosphate = orotate + 5-phospho-alpha-D-ribose 1-diphosphate. The protein operates within pyrimidine metabolism; UMP biosynthesis via de novo pathway; UMP from orotate: step 1/2. Catalyzes the transfer of a ribosyl phosphate group from 5-phosphoribose 1-diphosphate to orotate, leading to the formation of orotidine monophosphate (OMP). In Helicobacter pylori (strain ATCC 700392 / 26695) (Campylobacter pylori), this protein is Orotate phosphoribosyltransferase.